The following is a 352-amino-acid chain: Alanine racemase (352 aa).

The active-site Proton acceptor; specific for D-alanine is K33. K33 carries the post-translational modification N6-(pyridoxal phosphate)lysine. R129 serves as a coordination point for substrate. The active-site Proton acceptor; specific for L-alanine is the Y250. M298 contributes to the substrate binding site.

This sequence belongs to the alanine racemase family. It depends on pyridoxal 5'-phosphate as a cofactor.

The catalysed reaction is L-alanine = D-alanine. It participates in amino-acid biosynthesis; D-alanine biosynthesis; D-alanine from L-alanine: step 1/1. Its function is as follows. Catalyzes the interconversion of L-alanine and D-alanine. May also act on other amino acids. This chain is Alanine racemase (alr), found in Neisseria meningitidis serogroup A / serotype 4A (strain DSM 15465 / Z2491).